The sequence spans 213 residues: Large ribosomal subunit protein uL3 (213 aa).

The tract at residues 124–151 (KRHGQSRGPMAHGSRYHRRPGSMGSIAP) is disordered.

This sequence belongs to the universal ribosomal protein uL3 family. As to quaternary structure, part of the 50S ribosomal subunit. Forms a cluster with proteins L14 and L19.

Its function is as follows. One of the primary rRNA binding proteins, it binds directly near the 3'-end of the 23S rRNA, where it nucleates assembly of the 50S subunit. The protein is Large ribosomal subunit protein uL3 of Geobacillus kaustophilus (strain HTA426).